Reading from the N-terminus, the 892-residue chain is Alanine--tRNA ligase (892 aa).

Residues H596, H600, C700, and H704 each coordinate Zn(2+).

This sequence belongs to the class-II aminoacyl-tRNA synthetase family. Zn(2+) serves as cofactor.

The protein resides in the cytoplasm. It catalyses the reaction tRNA(Ala) + L-alanine + ATP = L-alanyl-tRNA(Ala) + AMP + diphosphate. Functionally, catalyzes the attachment of alanine to tRNA(Ala) in a two-step reaction: alanine is first activated by ATP to form Ala-AMP and then transferred to the acceptor end of tRNA(Ala). Also edits incorrectly charged Ser-tRNA(Ala) and Gly-tRNA(Ala) via its editing domain. This is Alanine--tRNA ligase from Methanococcus maripaludis (strain DSM 14266 / JCM 13030 / NBRC 101832 / S2 / LL).